Reading from the N-terminus, the 393-residue chain is Putative odorant receptor 69a, isoform A (393 aa).

Residues 1–39 are Cytoplasmic-facing; the sequence is MQLHDHMKYIDLGCKMACIPRYQWKGRPTERQFYASEQR. A helical membrane pass occupies residues 40-60; sequence IVFLLGTICQIFQITGVLIYW. At 61–76 the chain is on the extracellular side; it reads YCNGRLATETGTFVAQ. The chain crosses the membrane as a helical span at residues 77–97; it reads LSEMCSSFCLTFVGFCNVYAI. Residues 98–139 lie on the Cytoplasmic side of the membrane; that stretch reads STNRNQIETLLEELHQIYPRYRKNHYRCQHYFDMAMTIMRIE. Residues 140-160 form a helical membrane-spanning segment; that stretch reads FLFYMILYVYYNSAPLWVLLW. The Extracellular segment spans residues 161-189; sequence EHLHEEYDLSFKTQTNTWFPWKVHGSALG. The chain crosses the membrane as a helical span at residues 190 to 210; it reads FGMAVLSITVGSFVGVGFSIV. Residues 211 to 269 lie on the Cytoplasmic side of the membrane; sequence TQNLICLLTFQLKLHYDGISSQLVSLDCRRPGAHKELSILIAHHSRILQLGDQVNDIMN. Residues 270-290 form a helical membrane-spanning segment; sequence FVFGSSLVGATIAICMSSVSI. Residues 291 to 304 are Extracellular-facing; the sequence is MLLDLASAFKYASG. The chain crosses the membrane as a helical span at residues 305 to 325; sequence LVAFVLYNFVICYMGTEVTLA. At 326 to 365 the chain is on the cytoplasmic side; that stretch reads SGKVLPAAFYNNWYEGDLVYRRMLLILMMRATKPYMWKTY. Residues 366-386 form a helical membrane-spanning segment; that stretch reads KLAPVSITTYMATLKFSYQMF. The Extracellular segment spans residues 387 to 393; it reads TCVRSLK.

Belongs to the insect chemoreceptor superfamily. Heteromeric odorant receptor channel (TC 1.A.69) family. Or49a subfamily. In terms of assembly, interacts with Orco. Complexes exist early in the endomembrane system in olfactory sensory neurons (OSNs), coupling these complexes to the conserved ciliary trafficking pathway. Expressed in olfactory sensory neurons in the antenna.

It is found in the cell membrane. Functionally, odorant receptor which mediates acceptance or avoidance behavior, depending on its substrates. The odorant receptor repertoire encodes a large collection of odor stimuli that vary widely in identity, intensity, and duration. May form a complex with Orco to form odorant-sensing units, providing sensitive and prolonged odorant signaling and calcium permeability. This Drosophila melanogaster (Fruit fly) protein is Putative odorant receptor 69a, isoform A (Or69a).